The primary structure comprises 374 residues: Anthranilate O-methyltransferase 2 (374 aa).

Tyr18 serves as a coordination point for S-adenosyl-L-homocysteine. Gln25 lines the anthranilate pocket. Positions 59, 64, 98, 99, 142, and 143 each coordinate S-adenosyl-L-homocysteine. Anthranilate is bound at residue Trp164. 2 residues coordinate Mg(2+): Glu261 and Phe263.

This sequence belongs to the methyltransferase superfamily. Type-7 methyltransferase family. SABATH subfamily.

It carries out the reaction anthranilate + S-adenosyl-L-methionine = O-methyl anthranilate + S-adenosyl-L-homocysteine. In terms of biological role, methyltransferase involved in the biosynthesis of methyl anthranilate in response to stresses. Utilizes anthranilic acid as substrate. Produces exclusively the O-methyl ester. In Zea mays (Maize), this protein is Anthranilate O-methyltransferase 2 (AAMT2).